The sequence spans 132 residues: Ribonuclease VapC (132 aa).

Residues 4–123 (YMLDTNIVIY…SNNLREFERV (120 aa)) form the PINc domain. Mg(2+)-binding residues include D7 and D98.

Belongs to the PINc/VapC protein family. Probably forms a complex with cognate antitoxin VapB2. Requires Mg(2+) as cofactor.

In terms of biological role, toxic component of a type II toxin-antitoxin (TA) system. Acts as an RNase. Its toxic effect is neutralized by cognate antitoxin VapB2 but not by non-cognate antitoxin VapB1. This is Ribonuclease VapC from Haemophilus influenzae (strain 86-028NP).